Consider the following 418-residue polypeptide: Enolase (418 aa).

Residue Gln-162 coordinates (2R)-2-phosphoglycerate. Glu-204 functions as the Proton donor in the catalytic mechanism. Mg(2+)-binding residues include Asp-241, Glu-283, and Asp-309. (2R)-2-phosphoglycerate-binding residues include Lys-334, Arg-363, Ser-364, and Lys-385. Lys-334 serves as the catalytic Proton acceptor.

Belongs to the enolase family. Requires Mg(2+) as cofactor.

Its subcellular location is the cytoplasm. It is found in the secreted. It localises to the cell surface. The catalysed reaction is (2R)-2-phosphoglycerate = phosphoenolpyruvate + H2O. Its pathway is carbohydrate degradation; glycolysis; pyruvate from D-glyceraldehyde 3-phosphate: step 4/5. Its function is as follows. Catalyzes the reversible conversion of 2-phosphoglycerate (2-PG) into phosphoenolpyruvate (PEP). It is essential for the degradation of carbohydrates via glycolysis. In Pelagibacter ubique (strain HTCC1062), this protein is Enolase.